The following is a 120-amino-acid chain: UPF0231 protein YacL (120 aa).

This sequence belongs to the UPF0231 family.

The sequence is that of UPF0231 protein YacL from Escherichia coli O139:H28 (strain E24377A / ETEC).